A 345-amino-acid polypeptide reads, in one-letter code: Phosphoribosylformylglycinamidine cyclo-ligase (345 aa).

It belongs to the AIR synthase family.

Its subcellular location is the cytoplasm. It carries out the reaction 2-formamido-N(1)-(5-O-phospho-beta-D-ribosyl)acetamidine + ATP = 5-amino-1-(5-phospho-beta-D-ribosyl)imidazole + ADP + phosphate + H(+). It participates in purine metabolism; IMP biosynthesis via de novo pathway; 5-amino-1-(5-phospho-D-ribosyl)imidazole from N(2)-formyl-N(1)-(5-phospho-D-ribosyl)glycinamide: step 2/2. This Actinobacillus pleuropneumoniae serotype 5b (strain L20) protein is Phosphoribosylformylglycinamidine cyclo-ligase.